A 1885-amino-acid polypeptide reads, in one-letter code: Chitin synthase 5 (1885 aa).

Residues Met-1–Ala-789 form the Myosin motor domain. Gly-99 to Thr-106 is an ATP binding site. Asn-219 and Asn-429 each carry an N-linked (GlcNAc...) asparagine glycan. Positions Lys-601–Pro-649 are disordered. A compositionally biased stretch (basic residues) spans Ser-609 to Ser-621. The interval Leu-666 to Asp-690 is actin-binding. An N-linked (GlcNAc...) asparagine glycan is attached at Asn-668. A disordered region spans residues Gly-794–Leu-817. 2 consecutive transmembrane segments (helical) span residues Trp-894–Gly-914 and Phe-929–Phe-949. The 60-residue stretch at Gln-957–Phe-1016 folds into the Cytochrome b5 heme-binding domain. Residues Asn-1043 and Asn-1068 are each glycosylated (N-linked (GlcNAc...) asparagine). The helical transmembrane segment at Ile-1205–Leu-1225 threads the bilayer. N-linked (GlcNAc...) asparagine glycans are attached at residues Asn-1462 and Asn-1568. The next 3 membrane-spanning stretches (helical) occupy residues Leu-1599–Leu-1619, Val-1626–Ile-1646, and Met-1653–Leu-1673. N-linked (GlcNAc...) asparagine glycans are attached at residues Asn-1759 and Asn-1790. In terms of domain architecture, DEK-C spans Leu-1827–Ser-1882.

In the N-terminal section; belongs to the TRAFAC class myosin-kinesin ATPase superfamily. Myosin family. It in the C-terminal section; belongs to the chitin synthase family. Class V subfamily. Maximal activity requires trypsin activation, suggesting a zymogenic nature.

The protein resides in the cell membrane. Its subcellular location is the membrane. It carries out the reaction [(1-&gt;4)-N-acetyl-beta-D-glucosaminyl](n) + UDP-N-acetyl-alpha-D-glucosamine = [(1-&gt;4)-N-acetyl-beta-D-glucosaminyl](n+1) + UDP + H(+). In terms of biological role, polymerizes chitin, a structural polymer of the cell wall and septum, by transferring the sugar moiety of UDP-GlcNAc to the non-reducing end of the growing chitin polymer. CHS5 is required for the sustained growth at 37 degrees Celsius and is of critical importance for virulence. Especially important at infection temperatures for maintaining the cell wall integrity of developing yeast buds, elongating tips of hyphae, and random sites of expansion in sclerotic forms. This chain is Chitin synthase 5, found in Exophiala dermatitidis (Black yeast-like fungus).